Reading from the N-terminus, the 651-residue chain is DNA topoisomerase 3 (651 aa).

A Toprim domain is found at 1-134; the sequence is MRLFIAEKPS…KRDKILRCLI (134 aa). 3 residues coordinate Mg(2+): Glu7, Asp103, and Asp105. Residues 155–612 form the Topo IA-type catalytic domain; it reads FIPLATSALA…NLNQILPDLV (458 aa). Positions 194–199 are interaction with DNA; the sequence is SVGRVQ. Tyr337 functions as the O-(5'-phospho-DNA)-tyrosine intermediate in the catalytic mechanism. The segment at 631–651 is disordered; that stretch reads SDRAKPKSAVKKSSKSNGETD.

It belongs to the type IA topoisomerase family. Mg(2+) serves as cofactor.

The catalysed reaction is ATP-independent breakage of single-stranded DNA, followed by passage and rejoining.. In terms of biological role, releases the supercoiling and torsional tension of DNA, which is introduced during the DNA replication and transcription, by transiently cleaving and rejoining one strand of the DNA duplex. Introduces a single-strand break via transesterification at a target site in duplex DNA. The scissile phosphodiester is attacked by the catalytic tyrosine of the enzyme, resulting in the formation of a DNA-(5'-phosphotyrosyl)-enzyme intermediate and the expulsion of a 3'-OH DNA strand. The free DNA strand then undergoes passage around the unbroken strand, thus removing DNA supercoils. Finally, in the religation step, the DNA 3'-OH attacks the covalent intermediate to expel the active-site tyrosine and restore the DNA phosphodiester backbone. This Haemophilus influenzae (strain ATCC 51907 / DSM 11121 / KW20 / Rd) protein is DNA topoisomerase 3.